The primary structure comprises 328 residues: Phosphatidylglycerol--prolipoprotein diacylglyceryl transferase (328 aa).

3 helical membrane passes run 15 to 35, 58 to 78, and 106 to 126; these read VIQG…ILIS, FMFS…TLVY, and GMAI…IINT. R156 contributes to the a 1,2-diacyl-sn-glycero-3-phospho-(1'-sn-glycerol) binding site. 2 helical membrane passes run 242–262 and 289–309; these read GFIF…IEYL and ISMG…WVVV.

The protein belongs to the Lgt family.

It localises to the cell inner membrane. It carries out the reaction L-cysteinyl-[prolipoprotein] + a 1,2-diacyl-sn-glycero-3-phospho-(1'-sn-glycerol) = an S-1,2-diacyl-sn-glyceryl-L-cysteinyl-[prolipoprotein] + sn-glycerol 1-phosphate + H(+). Its pathway is protein modification; lipoprotein biosynthesis (diacylglyceryl transfer). Its function is as follows. Catalyzes the transfer of the diacylglyceryl group from phosphatidylglycerol to the sulfhydryl group of the N-terminal cysteine of a prolipoprotein, the first step in the formation of mature lipoproteins. The sequence is that of Phosphatidylglycerol--prolipoprotein diacylglyceryl transferase from Borrelia garinii subsp. bavariensis (strain ATCC BAA-2496 / DSM 23469 / PBi) (Borreliella bavariensis).